A 257-amino-acid polypeptide reads, in one-letter code: Zinc import ATP-binding protein ZnuC (257 aa).

The ABC transporter domain maps to 5 to 220 (VELQSVTVTF…PSYVALFGQQ (216 aa)). Residue 37–44 (GPNGAGKS) participates in ATP binding. Residues 234-257 (HEHDLAGSPVGPCQHNKQHGHDNA) form a disordered region.

This sequence belongs to the ABC transporter superfamily. Zinc importer (TC 3.A.1.15.5) family. As to quaternary structure, the complex is composed of two ATP-binding proteins (ZnuC), two transmembrane proteins (ZnuB) and a solute-binding protein (ZnuA).

The protein localises to the cell inner membrane. The catalysed reaction is Zn(2+)(out) + ATP(in) + H2O(in) = Zn(2+)(in) + ADP(in) + phosphate(in) + H(+)(in). In terms of biological role, part of the ABC transporter complex ZnuABC involved in zinc import. Responsible for energy coupling to the transport system. This chain is Zinc import ATP-binding protein ZnuC, found in Photobacterium profundum (strain SS9).